The following is a 238-amino-acid chain: Ribonuclease PH (238 aa).

Residues Arg-86 and Gly-124–Arg-126 each bind phosphate.

The protein belongs to the RNase PH family. As to quaternary structure, homohexameric ring arranged as a trimer of dimers.

It catalyses the reaction tRNA(n+1) + phosphate = tRNA(n) + a ribonucleoside 5'-diphosphate. Functionally, phosphorolytic 3'-5' exoribonuclease that plays an important role in tRNA 3'-end maturation. Removes nucleotide residues following the 3'-CCA terminus of tRNAs; can also add nucleotides to the ends of RNA molecules by using nucleoside diphosphates as substrates, but this may not be physiologically important. Probably plays a role in initiation of 16S rRNA degradation (leading to ribosome degradation) during starvation. This is Ribonuclease PH from Psychrobacter arcticus (strain DSM 17307 / VKM B-2377 / 273-4).